The primary structure comprises 609 residues: Elongation factor 4 (609 aa).

The 183-residue stretch at 5–187 folds into the tr-type G domain; it reads SKIRNFSIIA…AIVAKIPPPE (183 aa). GTP is bound by residues 17–22 and 134–137; these read DHGKST and NKID.

Belongs to the TRAFAC class translation factor GTPase superfamily. Classic translation factor GTPase family. LepA subfamily.

The protein resides in the cell inner membrane. The catalysed reaction is GTP + H2O = GDP + phosphate + H(+). In terms of biological role, required for accurate and efficient protein synthesis under certain stress conditions. May act as a fidelity factor of the translation reaction, by catalyzing a one-codon backward translocation of tRNAs on improperly translocated ribosomes. Back-translocation proceeds from a post-translocation (POST) complex to a pre-translocation (PRE) complex, thus giving elongation factor G a second chance to translocate the tRNAs correctly. Binds to ribosomes in a GTP-dependent manner. The polypeptide is Elongation factor 4 (Erythrobacter litoralis (strain HTCC2594)).